The primary structure comprises 189 residues: Der GTPase-activating protein YihI (189 aa).

Residues 1–81 are disordered; sequence MARKKKTRRV…ALAKKDPRLG (81 aa). 2 stretches are compositionally biased toward basic and acidic residues: residues 9-27 and 35-46; these read RVSD…ELPK and TRYELDAKARED. Polar residues predominate over residues 60 to 71; that stretch reads RHSATENNNNHQ.

This sequence belongs to the YihI family. Interacts with Der.

A GTPase-activating protein (GAP) that modifies Der/EngA GTPase function. May play a role in ribosome biogenesis. The polypeptide is Der GTPase-activating protein YihI (Pasteurella multocida (strain Pm70)).